We begin with the raw amino-acid sequence, 539 residues long: Glutamyl-tRNA(Gln) amidotransferase subunit A, mitochondrial (539 aa).

Catalysis depends on charge relay system residues K94 and S181. Residue S205 is the Acyl-ester intermediate of the active site.

It belongs to the amidase family. GatA subfamily. Subunit of the heterotrimeric GatCAB amidotransferase (AdT) complex, composed of A, B and C subunits.

The protein resides in the mitochondrion. It carries out the reaction L-glutamyl-tRNA(Gln) + L-glutamine + ATP + H2O = L-glutaminyl-tRNA(Gln) + L-glutamate + ADP + phosphate + H(+). Its function is as follows. Allows the formation of correctly charged Gln-tRNA(Gln) through the transamidation of misacylated Glu-tRNA(Gln) in the mitochondria. The reaction takes place in the presence of glutamine and ATP through an activated gamma-phospho-Glu-tRNA(Gln). The sequence is that of Glutamyl-tRNA(Gln) amidotransferase subunit A, mitochondrial from Mycosarcoma maydis (Corn smut fungus).